A 365-amino-acid chain; its full sequence is Selina-4(15),7(11)-diene synthase ((2E,6E)-farnesyl diphosphate cyclizing) (365 aa).

The Mg(2+) site is built by aspartate 82 and glutamate 87. Residues 82-87 (DDGHCE) carry the DDXXXE motif motif. A substrate-binding site is contributed by arginine 178. Mg(2+) is bound by residues asparagine 224 and serine 228. A substrate-binding site is contributed by lysine 231. Mg(2+) is bound at residue glutamate 232. 310 to 311 (RY) contributes to the substrate binding site.

Belongs to the terpene synthase family. As to quaternary structure, monomer. Mg(2+) is required as a cofactor.

It catalyses the reaction (2E,6E)-farnesyl diphosphate = selina-4(15),7(11)-diene + diphosphate. It functions in the pathway secondary metabolite biosynthesis; terpenoid biosynthesis. In terms of biological role, catalyzes the conversion of (2E,6E)-farnesyl diphosphate (FPP) to yield the bicyclic sesquiterpene selina-4(15),7(11)-diene via a 1,10-cyclization, which requires the abstraction of the pyrophosphate from FPP leading to a (E,E)-germacradienyl cation. The only accepted substrate is (2E,6E)-farnesyl diphosphate (FPP). The protein is Selina-4(15),7(11)-diene synthase ((2E,6E)-farnesyl diphosphate cyclizing) of Streptomyces pristinaespiralis (strain ATCC 25486 / DSM 40338 / CBS 914.69 / JCM 4507 / KCC S-0507 / NBRC 13074 / NRRL 2958 / 5647).